A 213-amino-acid polypeptide reads, in one-letter code: Nicotinate-nucleotide adenylyltransferase (213 aa).

This sequence belongs to the NadD family.

The catalysed reaction is nicotinate beta-D-ribonucleotide + ATP + H(+) = deamido-NAD(+) + diphosphate. Its pathway is cofactor biosynthesis; NAD(+) biosynthesis; deamido-NAD(+) from nicotinate D-ribonucleotide: step 1/1. In terms of biological role, catalyzes the reversible adenylation of nicotinate mononucleotide (NaMN) to nicotinic acid adenine dinucleotide (NaAD). The chain is Nicotinate-nucleotide adenylyltransferase from Salmonella typhimurium (strain LT2 / SGSC1412 / ATCC 700720).